The chain runs to 110 residues: PCNA-associated factor (110 aa).

Lys-15 is covalently cross-linked (Glycyl lysine isopeptide (Lys-Gly) (interchain with G-Cter in ubiquitin)). The D-box signature appears at 23 to 34; sequence RKVLGSSTFVTN. N6-acetyllysine; alternate is present on Lys-24. Lys-24 is covalently cross-linked (Glycyl lysine isopeptide (Lys-Gly) (interchain with G-Cter in ubiquitin); alternate). 2 positions are modified to phosphoserine: Ser-28 and Ser-71. A compositionally biased stretch (low complexity) spans 28 to 39; that stretch reads SSTFVTNSSSSS. The disordered stretch occupies residues 28–110; sequence SSTFVTNSSS…QPDHRDDENE (83 aa). Positions 61-71 match the PIP-box motif; that stretch reads QKGIGEFFRLS. The segment covering 71-80 has biased composition (basic and acidic residues); that stretch reads SPKESKKENQ. Positions 77–79 match the KEN box motif; sequence KEN. An Initiation motif motif is present at residues 84 to 96; sequence EAGTSGLGKAKRK.

In terms of assembly, interacts (when monoubiquitinated at Lys-15 and Lys-24) with PCNA. Interacts with isoform 2/p33ING1b of ING1. Interacts with BRCA1. In terms of processing, monoubiquitinated at Lys-15 and Lys-24 during normal S phase, promoting its association with PCNA. Also diubiquitinated at these 2 sites. Following DNA damage, monoubiquitin chains at Lys-15 and Lys-24 are probably extended, leading to disrupt the interaction with PCNA. Polyubiquitinated by the APC/C complex at the mitotic exit, leading to its degradation by the proteasome.

It is found in the nucleus. It localises to the cytoplasm. Its subcellular location is the perinuclear region. Its function is as follows. PCNA-binding protein that acts as a regulator of DNA repair during DNA replication. Following DNA damage, the interaction with PCNA is disrupted, facilitating the interaction between monoubiquitinated PCNA and the translesion DNA synthesis DNA polymerase eta (POLH) at stalled replisomes, facilitating the bypass of replication-fork-blocking lesions. Also acts as a regulator of centrosome number. This chain is PCNA-associated factor, found in Mus musculus (Mouse).